Reading from the N-terminus, the 104-residue chain is N(4)-acetylcytidine amidohydrolase (104 aa).

The region spanning 6–102 (ITFYQRFEAD…SEFWVIEIRL (97 aa)) is the ASCH domain. The active-site Proton acceptor is lysine 21. Threonine 24 serves as the catalytic Nucleophile. Glutamate 74 (proton donor) is an active-site residue.

This sequence belongs to the N(4)-acetylcytidine amidohydrolase family.

It catalyses the reaction N(4)-acetylcytidine + H2O = cytidine + acetate + H(+). It carries out the reaction N(4)-acetyl-2'-deoxycytidine + H2O = 2'-deoxycytidine + acetate + H(+). The catalysed reaction is N(4)-acetylcytosine + H2O = cytosine + acetate + H(+). In terms of biological role, catalyzes the hydrolysis of N(4)-acetylcytidine (ac4C). The chain is N(4)-acetylcytidine amidohydrolase from Haemophilus influenzae (strain PittEE).